The following is a 426-amino-acid chain: Fc receptor-like B (426 aa).

Positions 1 to 17 (MWPLTALLLLVPSSGQA) are cleaved as a signal peptide. 2 consecutive Ig-like C2-type domains span residues 23–101 (PILS…LSVS) and 103–189 (DWLI…VAVT). Intrachain disulfides connect Cys44-Cys85 and Cys124-Cys168. An N-linked (GlcNAc...) asparagine glycan is attached at Asn152. A disordered region spans residues 400-426 (ELRGTPETPTSHFAVSPGTPETTPVES). The segment covering 406-426 (ETPTSHFAVSPGTPETTPVES) has biased composition (polar residues).

In terms of tissue distribution, expressed at low levels. Expressed in B-lymphocytes. Detected in tonsil, lung, kidney, spleen and placenta. Expressed by a small subset of germinal center B-cells in tonsils and by melanocytes (at protein level).

It is found in the cytoplasm. It localises to the endoplasmic reticulum. The polypeptide is Fc receptor-like B (FCRLB) (Homo sapiens (Human)).